A 1170-amino-acid polypeptide reads, in one-letter code: WD repeat-containing protein 35 (1170 aa).

WD repeat units follow at residues 12–51 (PNNVKLKCISWNKDQGFIACGGEDGLLKVLRLETQTDDSK), 69–108 (GHSGAVQVVTWNEQYQKLTTSDQNGLIIVWMLYKGSWYEE), 113–152 (RNKSVVRSMSWNADGQKICIVYEDGAVIVGSVDGNRIWGK), 154–193 (LKGIQLCHVTWSADSKILLFGMANGEIHIYDNQGNFIMKM), and 491–528 (GTRDPICAITASDKTLIVGRESGVIQRYSFPNVALIQK).

Component of the IFT complex A (IFT-A) complex. IFT-A complex is divided into a core subcomplex composed of IFT122:IFT140:WDR19 which is associated with TULP3 and a peripheral subcomplex composed of IFT43:WDR35:TTC21B. Interacts directy with IFT122, ITF43 and TTC21B. Interacts with IFT43. Interacts with CFAP61. Expressed at high levels in testis and at lower levels in the brain (at protein level). Also present in other tissues, including heart, uterus, spinal cord, ovary, liver, kidney, lung, pancreas and stomach.

It localises to the cytoplasm. The protein resides in the cytoskeleton. It is found in the microtubule organizing center. Its subcellular location is the centrosome. The protein localises to the cilium axoneme. It localises to the cilium basal body. Its function is as follows. As a component of the IFT complex A (IFT-A), a complex required for retrograde ciliary transport and entry into cilia of G protein-coupled receptors (GPCRs), it is involved in ciliogenesis and ciliary protein trafficking. May promote CASP3 activation and TNF-stimulated apoptosis. This Rattus norvegicus (Rat) protein is WD repeat-containing protein 35 (Wdr35).